The sequence spans 166 residues: Ureidoglycolate lyase (166 aa).

Belongs to the ureidoglycolate lyase family. As to quaternary structure, homodimer. Ni(2+) is required as a cofactor.

The enzyme catalyses (S)-ureidoglycolate = urea + glyoxylate. It participates in nitrogen metabolism; (S)-allantoin degradation. Its function is as follows. Catalyzes the catabolism of the allantoin degradation intermediate (S)-ureidoglycolate, generating urea and glyoxylate. Involved in the utilization of allantoin as nitrogen source. This is Ureidoglycolate lyase from Rhizobium etli (strain CIAT 652).